The sequence spans 590 residues: Fucose-1-phosphate guanylyltransferase (590 aa).

Expressed at highest levels in brain, moderately in testis, ovary and kidney, and weakly in liver, spleen, heart and lung.

The protein resides in the cytoplasm. It catalyses the reaction beta-L-fucose 1-phosphate + GTP + H(+) = GDP-beta-L-fucose + diphosphate. Functionally, catalyzes the formation of GDP-L-fucose from GTP and L-fucose-1-phosphate. Functions as a salvage pathway to reutilize L-fucose arising from the turnover of glycoproteins and glycolipids. This Mus musculus (Mouse) protein is Fucose-1-phosphate guanylyltransferase.